A 166-amino-acid chain; its full sequence is NAD(P)H-quinone oxidoreductase subunit I, chloroplastic (166 aa).

4Fe-4S ferredoxin-type domains lie at 55-84 (GRIH…VDWK) and 95-124 (LNYS…MTEE). 8 residues coordinate [4Fe-4S] cluster: Cys64, Cys67, Cys70, Cys74, Cys104, Cys107, Cys110, and Cys114.

Belongs to the complex I 23 kDa subunit family. In terms of assembly, NDH is composed of at least 16 different subunits, 5 of which are encoded in the nucleus. [4Fe-4S] cluster serves as cofactor.

It localises to the plastid. The protein resides in the chloroplast thylakoid membrane. The enzyme catalyses a plastoquinone + NADH + (n+1) H(+)(in) = a plastoquinol + NAD(+) + n H(+)(out). It catalyses the reaction a plastoquinone + NADPH + (n+1) H(+)(in) = a plastoquinol + NADP(+) + n H(+)(out). In terms of biological role, NDH shuttles electrons from NAD(P)H:plastoquinone, via FMN and iron-sulfur (Fe-S) centers, to quinones in the photosynthetic chain and possibly in a chloroplast respiratory chain. The immediate electron acceptor for the enzyme in this species is believed to be plastoquinone. Couples the redox reaction to proton translocation, and thus conserves the redox energy in a proton gradient. This Chamaechaenactis scaposa (Fullstem) protein is NAD(P)H-quinone oxidoreductase subunit I, chloroplastic.